The primary structure comprises 106 residues: MNNERIYQVLKGPVFSEKAQVLGDTAGVQVFKVDINATKLEIKKAVEKLFGVEVVKVNTTITKGKTKRFGRTLGRRSDVKKAYVTLKAGQDVEMADLGDTAESAAE.

The protein belongs to the universal ribosomal protein uL23 family. As to quaternary structure, part of the 50S ribosomal subunit. Contacts protein L29, and trigger factor when it is bound to the ribosome.

In terms of biological role, one of the early assembly proteins it binds 23S rRNA. One of the proteins that surrounds the polypeptide exit tunnel on the outside of the ribosome. Forms the main docking site for trigger factor binding to the ribosome. This Acinetobacter baumannii (strain AB307-0294) protein is Large ribosomal subunit protein uL23.